Here is a 178-residue protein sequence, read N- to C-terminus: Signaling threshold-regulating transmembrane adapter 1 (178 aa).

Residues 1-23 (MSRENNCTTADLAWGIPSITQAW) lie on the Extracellular side of the membrane. An N-linked (GlcNAc...) asparagine glycan is attached at N6. A helical; Signal-anchor for type III membrane protein membrane pass occupies residues 24-44 (GLWALFGVVTMLLLISLAALL). The Cytoplasmic portion of the chain corresponds to 45 to 178 (SQWTRGRRRT…AYANSQPAPS (134 aa)). 2 positions are modified to phosphoserine: S62 and S65. Phosphotyrosine is present on Y72. An interaction with GRB2 region spans residues 72 to 75 (YGNL). Positions 81 to 102 (GRLSEESRSEEQDPSSGGLARG) are disordered. A phosphoserine mark is found at S84, S87, and S89. Y109 carries the phosphotyrosine modification. A Phosphothreonine modification is found at T126. The interval 128–133 (IKYCEV) is interaction with PTPN11. Residues Y130 and Y151 each carry the phosphotyrosine modification. Residues 151–154 (YASV) are interaction with CSK. At S164 the chain carries Phosphoserine. Y170 is modified (phosphotyrosine). The interaction with GRB2 stretch occupies residues 170–173 (YANS).

Homodimer; disulfide-linked. When phosphorylated, interacts with PTPN11/SHP2, GRB2 and CSK. In terms of processing, phosphorylated on tyrosines upon TCR activation; which promotes recruitment of PTPN11, GRB2 and CSK. Lymph node, spleen and thymus.

The protein localises to the cell membrane. Functionally, negatively regulates T-cell antigen receptor (TCR)-mediated signaling. Involved in positive selection of T-cells. The chain is Signaling threshold-regulating transmembrane adapter 1 (Sit1) from Rattus norvegicus (Rat).